Here is a 356-residue protein sequence, read N- to C-terminus: tRNA-specific 2-thiouridylase MnmA (356 aa).

ATP is bound by residues 6-13 and L32; that span reads GMSGGVDS. C102 (nucleophile) is an active-site residue. An intrachain disulfide couples C102 to C200. ATP is bound at residue G127. The segment at 150-152 is interaction with tRNA; sequence RDQ. C200 acts as the Cysteine persulfide intermediate in catalysis. An interaction with tRNA region spans residues 302 to 303; that stretch reads RY.

The protein belongs to the MnmA/TRMU family.

It localises to the cytoplasm. The enzyme catalyses S-sulfanyl-L-cysteinyl-[protein] + uridine(34) in tRNA + AH2 + ATP = 2-thiouridine(34) in tRNA + L-cysteinyl-[protein] + A + AMP + diphosphate + H(+). Catalyzes the 2-thiolation of uridine at the wobble position (U34) of tRNA, leading to the formation of s(2)U34. The protein is tRNA-specific 2-thiouridylase MnmA of Aquifex aeolicus (strain VF5).